The chain runs to 217 residues: uncharacterized protein (217 aa).

The region spanning 98–203 is the PilZ domain; sequence QRRQYVRTDA…GDQQALLQYC (106 aa).

This is an uncharacterized protein from Bacillus subtilis (strain 168).